We begin with the raw amino-acid sequence, 421 residues long: Imidazolonepropionase (421 aa).

Fe(3+) contacts are provided by H81 and H83. Residues H81 and H83 each coordinate Zn(2+). Positions 90, 153, and 186 each coordinate 4-imidazolone-5-propanoate. Y153 provides a ligand contact to N-formimidoyl-L-glutamate. H251 serves as a coordination point for Fe(3+). H251 provides a ligand contact to Zn(2+). E254 contributes to the 4-imidazolone-5-propanoate binding site. D326 is a binding site for Fe(3+). D326 contributes to the Zn(2+) binding site. Residues N328 and G330 each contribute to the N-formimidoyl-L-glutamate site. A 4-imidazolone-5-propanoate-binding site is contributed by S331.

The protein belongs to the metallo-dependent hydrolases superfamily. HutI family. It depends on Zn(2+) as a cofactor. Fe(3+) serves as cofactor.

The protein localises to the cytoplasm. The catalysed reaction is 4-imidazolone-5-propanoate + H2O = N-formimidoyl-L-glutamate. It participates in amino-acid degradation; L-histidine degradation into L-glutamate; N-formimidoyl-L-glutamate from L-histidine: step 3/3. In terms of biological role, catalyzes the hydrolytic cleavage of the carbon-nitrogen bond in imidazolone-5-propanoate to yield N-formimidoyl-L-glutamate. It is the third step in the universal histidine degradation pathway. In Streptococcus pyogenes serotype M12 (strain MGAS2096), this protein is Imidazolonepropionase.